The sequence spans 359 residues: Quinolinate synthase (359 aa).

Iminosuccinate-binding residues include histidine 81 and serine 99. A [4Fe-4S] cluster-binding site is contributed by cysteine 144. Iminosuccinate-binding positions include 170–172 (YVN) and serine 187. Position 229 (cysteine 229) interacts with [4Fe-4S] cluster. Iminosuccinate-binding positions include 255–257 (HPE) and threonine 272. Cysteine 315 is a binding site for [4Fe-4S] cluster.

It belongs to the quinolinate synthase family. Type 2 subfamily. It depends on [4Fe-4S] cluster as a cofactor.

Its subcellular location is the cytoplasm. It carries out the reaction iminosuccinate + dihydroxyacetone phosphate = quinolinate + phosphate + 2 H2O + H(+). Its pathway is cofactor biosynthesis; NAD(+) biosynthesis; quinolinate from iminoaspartate: step 1/1. Its function is as follows. Catalyzes the condensation of iminoaspartate with dihydroxyacetone phosphate to form quinolinate. The sequence is that of Quinolinate synthase from Sinorhizobium medicae (strain WSM419) (Ensifer medicae).